The sequence spans 305 residues: GMP synthase [glutamine-hydrolyzing] subunit B (305 aa).

One can recognise a GMPS ATP-PPase domain in the interval 2 to 184; the sequence is VNTERFIQQA…LGLPREIQHR (183 aa). Residue 29-35 participates in ATP binding; the sequence is SGGVDSS.

As to quaternary structure, heterodimer composed of a glutamine amidotransferase subunit (A) and a GMP-binding subunit (B).

It catalyses the reaction XMP + L-glutamine + ATP + H2O = GMP + L-glutamate + AMP + diphosphate + 2 H(+). It participates in purine metabolism; GMP biosynthesis; GMP from XMP (L-Gln route): step 1/1. In terms of biological role, catalyzes the synthesis of GMP from XMP. The polypeptide is GMP synthase [glutamine-hydrolyzing] subunit B (Methanosphaerula palustris (strain ATCC BAA-1556 / DSM 19958 / E1-9c)).